Reading from the N-terminus, the 168-residue chain is Phospholipase A and acyltransferase 1 (168 aa).

Residues 1-138 (MAFNDCFSLN…GEGVSEQANR (138 aa)) lie on the Cytoplasmic side of the membrane. The LRAT domain occupies 20–135 (LIEVFRPGYQ…LRYGEGVSEQ (116 aa)). H30 is an active-site residue. Residue C119 is the Acyl-thioester intermediate of the active site. The helical transmembrane segment at 139-159 (AISTVEFVTAAVGVFSFLGLF) threads the bilayer. Over 160 to 168 (PKGQRAKYY) the chain is Lumenal.

The protein belongs to the H-rev107 family. Abundantly expressed in testis, skeletal muscle, brain, and heart. As to expression, highly expressed in the testis, skeletal muscle, brain, heart, and thyroid.

Its subcellular location is the membrane. The protein resides in the cytoplasm. It localises to the nucleus. The catalysed reaction is a 1,2-diacyl-sn-glycero-3-phosphocholine + H2O = a 1-acyl-sn-glycero-3-phosphocholine + a fatty acid + H(+). It carries out the reaction a 1,2-diacyl-sn-glycero-3-phosphocholine + H2O = a 2-acyl-sn-glycero-3-phosphocholine + a fatty acid + H(+). The enzyme catalyses 1,2-dihexadecanoyl-sn-glycero-3-phosphocholine + H2O = 2-hexadecanoyl-sn-glycero-3-phosphocholine + hexadecanoate + H(+). It catalyses the reaction 1,2-dihexadecanoyl-sn-glycero-3-phosphocholine + H2O = 1-hexadecanoyl-sn-glycero-3-phosphocholine + hexadecanoate + H(+). The catalysed reaction is 1-hexadecanoyl-2-(5Z,8Z,11Z,14Z-eicosatetraenoyl)-sn-glycero-3-phosphoethanolamine + H2O = 2-(5Z,8Z,11Z,14Z)-eicosatetraenoyl-sn-glycero-3-phosphoethanolamine + hexadecanoate + H(+). It carries out the reaction 1-hexadecanoyl-2-(5Z,8Z,11Z,14Z-eicosatetraenoyl)-sn-glycero-3-phosphoethanolamine + H2O = 1-hexadecanoyl-sn-glycero-3-phosphoethanolamine + (5Z,8Z,11Z,14Z)-eicosatetraenoate + H(+). The enzyme catalyses 1,2-di-(9Z-octadecenoyl)-sn-glycero-3-phosphoethanolamine + 1,2-dihexadecanoyl-sn-glycero-3-phosphocholine = hexadecanoyl-sn-glycero-3-phosphocholine + N-hexadecanoyl-1,2-di-(9Z-octadecenoyl)-sn-glycero-3-phosphoethanolamine + H(+). It catalyses the reaction 1,2-dihexadecanoyl-sn-glycero-3-phosphocholine + a 2-acyl-sn-glycero-3-phosphocholine = a 1-hexadecanoyl-2-acyl-sn-glycero-3-phosphocholine + 2-hexadecanoyl-sn-glycero-3-phosphocholine. In terms of biological role, exhibits both phospholipase A1/2 and acyltransferase activities. Shows phospholipase A1 (PLA1) and A2 (PLA2) activity, catalyzing the calcium-independent release of fatty acids from the sn-1 or sn-2 position of glycerophospholipids. Shows O-acyltransferase activity, catalyzing the transfer of a fatty acyl group from glycerophospholipid to the hydroxyl group of lysophospholipid. Shows N-acyltransferase activity, catalyzing the calcium-independent transfer of a fatty acyl group at the sn-1 position of phosphatidylcholine (PC) and other glycerophospholipids to the primary amine of phosphatidylethanolamine (PE), forming N-acylphosphatidylethanolamine (NAPE) which serves as precursor for N-acylethanolamines (NAEs). The chain is Phospholipase A and acyltransferase 1 from Homo sapiens (Human).